A 360-amino-acid chain; its full sequence is Peptide chain release factor 1 (360 aa).

An N5-methylglutamine modification is found at Gln-236.

Belongs to the prokaryotic/mitochondrial release factor family. Methylated by PrmC. Methylation increases the termination efficiency of RF1.

Its subcellular location is the cytoplasm. Its function is as follows. Peptide chain release factor 1 directs the termination of translation in response to the peptide chain termination codons UAG and UAA. This chain is Peptide chain release factor 1, found in Ligilactobacillus salivarius (strain UCC118) (Lactobacillus salivarius).